Here is a 436-residue protein sequence, read N- to C-terminus: 3-ketoacyl-CoA thiolase (436 aa).

Residue C99 is the Acyl-thioester intermediate of the active site. Active-site proton acceptor residues include H392 and C422.

The protein belongs to the thiolase-like superfamily. Thiolase family. Heterotetramer of two alpha chains (FadJ) and two beta chains (FadI).

The protein localises to the cytoplasm. It catalyses the reaction an acyl-CoA + acetyl-CoA = a 3-oxoacyl-CoA + CoA. The protein operates within lipid metabolism; fatty acid beta-oxidation. In terms of biological role, catalyzes the final step of fatty acid oxidation in which acetyl-CoA is released and the CoA ester of a fatty acid two carbons shorter is formed. In Shigella boydii serotype 18 (strain CDC 3083-94 / BS512), this protein is 3-ketoacyl-CoA thiolase.